Here is a 206-residue protein sequence, read N- to C-terminus: MGTWILFACLVGAAFAMPLPPHPGHPGYINFSYENSHSQAINVDRIALVLTPLKWYQSMIRPPYSSYGYEPMGGWLHHQIIPVVSQQHPLTHTLQSHHHIPVVPAQQPRVRQQALMPVPGQQSMTPTQHHQPNLPLPAQQPFQPQPVQPQPHQPMQPQPPVQPMQPLLPQPPLPPMFPLRPLPPILPDLHLEAWPATDKTKQEEVD.

An N-terminal signal peptide occupies residues 1-16; the sequence is MGTWILFACLVGAAFA. The segment at 118–180 is disordered; sequence VPGQQSMTPT…PPLPPMFPLR (63 aa). Residues 128 to 142 are compositionally biased toward low complexity; the sequence is QHHQPNLPLPAQQPF. The segment covering 143–180 has biased composition (pro residues); that stretch reads QPQPVQPQPHQPMQPQPPVQPMQPLLPQPPLPPMFPLR.

It belongs to the amelogenin family.

The protein resides in the secreted. It is found in the extracellular space. It localises to the extracellular matrix. Plays a role in biomineralization. Seems to regulate the formation of crystallites during the secretory stage of tooth enamel development. Thought to play a major role in the structural organization and mineralization of developing enamel. This is Amelogenin, Y isoform (AMELY) from Homo sapiens (Human).